The chain runs to 119 residues: Large ribosomal subunit protein uL18 (119 aa).

The disordered stretch occupies residues methionine 1 to glycine 24. A compositionally biased stretch (basic residues) spans valine 10 to serine 20.

It belongs to the universal ribosomal protein uL18 family. As to quaternary structure, part of the 50S ribosomal subunit; part of the 5S rRNA/L5/L18/L25 subcomplex. Contacts the 5S and 23S rRNAs.

This is one of the proteins that bind and probably mediate the attachment of the 5S RNA into the large ribosomal subunit, where it forms part of the central protuberance. The chain is Large ribosomal subunit protein uL18 from Lysinibacillus sphaericus (strain C3-41).